The primary structure comprises 173 residues: Alpha-crystallin A chain (173 aa).

An N-acetylmethionine modification is found at Met1. Positions 1–63 are required for complex formation with BFSP1 and BFSP2; during homooligomerization, mediates the association of 2 dimers to form a tetramer; the sequence is MDVTIQHPWF…RTVLDSGISE (63 aa). Gln6 bears the Deamidated glutamine; partial mark. Ser45 bears the Phosphoserine mark. Position 50 is a deamidated glutamine; partial (Gln50). The region spanning 52 to 164 is the sHSP domain; that stretch reads LFRTVLDSGI…AERAIPVSRE (113 aa). Lys70 carries the N6-acetyllysine modification. Residue Gln90 is modified to Deamidated glutamine; partial. Residue Lys99 is modified to N6-acetyllysine. Residue His100 participates in Zn(2+) binding. A Deamidated asparagine; partial modification is found at Asn101. Zn(2+)-binding residues include Glu102 and His107. Position 122 is a phosphoserine (Ser122). Residue Asn123 is modified to Deamidated asparagine; partial. A disulfide bridge connects residues Cys131 and Cys142. Deamidated glutamine; partial is present on Gln147. Residue His154 participates in Zn(2+) binding. Residue Ser162 is glycosylated (O-linked (GlcNAc) serine).

It belongs to the small heat shock protein (HSP20) family. In terms of assembly, heteropolymer composed of three CRYAA and one CRYAB subunits. Inter-subunit bridging via zinc ions enhances stability, which is crucial as there is no protein turn over in the lens. Can also form homodimers and homotetramers (dimers of dimers) which serve as the building blocks of homooligomers. Within homooligomers, the zinc-binding motif is created from residues of 3 different molecules. His-100 and Glu-102 from one molecule are ligands of the zinc ion, and His-107 and His-154 residues from additional molecules complete the site with tetrahedral coordination geometry. Part of a complex required for lens intermediate filament formation composed of BFSP1, BFSP2 and CRYAA. Post-translationally, O-glycosylated; contains N-acetylglucosamine side chains. Deamidation of Asn-101 in lens occurs mostly during the first 30 years of age, followed by a small additional amount of deamidation (approximately 5%) during the next approximately 38 years, resulting in a maximum of approximately 50% deamidation during the lifetime of the individual. In terms of processing, phosphorylation on Ser-122 seems to be developmentally regulated. Absent in the first months of life, it appears during the first 12 years of human lifetime. The relative amount of phosphorylated form versus unphosphorylated form does not change over the lifetime of the individual. Post-translationally, acetylation at Lys-70 may increase chaperone activity. Undergoes age-dependent proteolytical cleavage at the C-terminus. Alpha-crystallin A(1-172) is the most predominant form produced most rapidly during the first 12 years of age and after this age is present in approximately 50% of the lens molecules. In terms of processing, in young individuals and during the first approximately 30 years of life, less than half molecules contain an intramolecular disulfide bond (oxidized form), while in the remaining fraction the cysteines are in the free sulfhydryl form (reduced form). With aging, the amount of oxidized form increases up to 90% and it becomes a major constituent of high molecular weight aggregates, concomitant with an age-dependent loss of its chaperone activity. The reduced form is undetectable in cataractous lenses. In terms of tissue distribution, expressed in the eye lens (at protein level).

It localises to the cytoplasm. The protein resides in the nucleus. In terms of biological role, contributes to the transparency and refractive index of the lens. In its oxidized form (absence of intramolecular disulfide bond), acts as a chaperone, preventing aggregation of various proteins under a wide range of stress conditions. Required for the correct formation of lens intermediate filaments as part of a complex composed of BFSP1, BFSP2 and CRYAA. The polypeptide is Alpha-crystallin A chain (CRYAA) (Homo sapiens (Human)).